The following is a 353-amino-acid chain: Deoxyhypusine synthase (353 aa).

NAD(+) contacts are provided by residues serine 90–serine 94, threonine 116–glycine 118, glutamate 122, and aspartate 228. Spermidine is bound at residue glutamate 121–glutamate 122. Aspartate 233 is a spermidine binding site. Glycine 275 contributes to the NAD(+) binding site. Histidine 280 is a binding site for spermidine. Residue threonine 300–alanine 301 coordinates NAD(+). Residues glycine 306–aspartate 308 and glutamate 315–lysine 321 each bind spermidine. Lysine 321 serves as the catalytic Nucleophile. Glutamate 334–alanine 335 is an NAD(+) binding site.

This sequence belongs to the deoxyhypusine synthase family. Homotetramer. It depends on NAD(+) as a cofactor.

It catalyses the reaction [eIF5A protein]-L-lysine + spermidine = [eIF5A protein]-deoxyhypusine + propane-1,3-diamine. The protein operates within protein modification; eIF5A hypusination. In terms of biological role, catalyzes the NAD-dependent oxidative cleavage of spermidine and the subsequent transfer of the butylamine moiety of spermidine to the epsilon-amino group of a specific lysine residue of the eIF-5A precursor protein to form the intermediate deoxyhypusine residue. This is Deoxyhypusine synthase (dys-1) from Neurospora crassa (strain ATCC 24698 / 74-OR23-1A / CBS 708.71 / DSM 1257 / FGSC 987).